The chain runs to 251 residues: 5'-nucleotidase SurE (251 aa).

Asp8, Asp9, Ser39, and Asn95 together coordinate a divalent metal cation.

Belongs to the SurE nucleotidase family. A divalent metal cation is required as a cofactor.

It localises to the cytoplasm. It catalyses the reaction a ribonucleoside 5'-phosphate + H2O = a ribonucleoside + phosphate. Nucleotidase that shows phosphatase activity on nucleoside 5'-monophosphates. The chain is 5'-nucleotidase SurE from Clostridium botulinum (strain Alaska E43 / Type E3).